The following is a 206-amino-acid chain: RNA pyrophosphohydrolase (206 aa).

The region spanning 6 to 149 (GYRPNVGIVL…KRGVYARALR (144 aa)) is the Nudix hydrolase domain. The Nudix box signature appears at 38–59 (GGMNTDETPVEAMYRELQEETG). The disordered stretch occupies residues 175-206 (MPGHTAGHDRPRKRPRTRGYWPKKATGDGPAS).

The protein belongs to the Nudix hydrolase family. RppH subfamily. The cofactor is a divalent metal cation.

Its function is as follows. Accelerates the degradation of transcripts by removing pyrophosphate from the 5'-end of triphosphorylated RNA, leading to a more labile monophosphorylated state that can stimulate subsequent ribonuclease cleavage. In Stenotrophomonas maltophilia (strain K279a), this protein is RNA pyrophosphohydrolase.